The sequence spans 514 residues: ATP synthase subunit alpha (514 aa).

170–177 contacts ATP; sequence GDRQIGKT.

Belongs to the ATPase alpha/beta chains family. As to quaternary structure, F-type ATPases have 2 components, CF(1) - the catalytic core - and CF(0) - the membrane proton channel. CF(1) has five subunits: alpha(3), beta(3), gamma(1), delta(1), epsilon(1). CF(0) has three main subunits: a(1), b(2) and c(9-12). The alpha and beta chains form an alternating ring which encloses part of the gamma chain. CF(1) is attached to CF(0) by a central stalk formed by the gamma and epsilon chains, while a peripheral stalk is formed by the delta and b chains.

Its subcellular location is the cell inner membrane. It catalyses the reaction ATP + H2O + 4 H(+)(in) = ADP + phosphate + 5 H(+)(out). Functionally, produces ATP from ADP in the presence of a proton gradient across the membrane. The alpha chain is a regulatory subunit. This Pseudomonas fluorescens (strain SBW25) protein is ATP synthase subunit alpha.